The sequence spans 416 residues: Formyl-CoA:oxalate CoA-transferase (416 aa).

CoA contacts are provided by residues 17–18 (QS), Arg38, 72–75 (LNTK), 96–98 (NFH), His104, and 137–140 (KAYE). Asp169 serves as the catalytic Nucleophile. Residue 248–250 (GGQ) participates in substrate binding. 273-275 (QEQ) is a binding site for CoA.

This sequence belongs to the CoA-transferase III family. Frc subfamily. In terms of assembly, homodimer.

It carries out the reaction formyl-CoA + oxalate = oxalyl-CoA + formate. Its pathway is metabolic intermediate degradation; oxalate degradation; CO(2) and formate from oxalate: step 1/2. Involved in the catabolism of oxalate and in the adapatation to low pH via the induction of the oxalate-dependent acid tolerance response (ATR). Catalyzes the transfer of the CoA moiety from formyl-CoA to oxalate. The chain is Formyl-CoA:oxalate CoA-transferase from Shigella boydii serotype 18 (strain CDC 3083-94 / BS512).